Reading from the N-terminus, the 210-residue chain is Oxygen-insensitive NADPH nitroreductase (210 aa).

150–155 (GVSLMG) is an NADP(+) binding site.

It belongs to the nitroreductase family.

Functionally, reduction of a variety of nitroaromatic compounds using NADPH as source of reducing equivalents; two electrons are transferred. The polypeptide is Oxygen-insensitive NADPH nitroreductase (rdxA) (Helicobacter pylori (strain J99 / ATCC 700824) (Campylobacter pylori J99)).